Here is a 196-residue protein sequence, read N- to C-terminus: Thymidine kinase (196 aa).

Position 17–24 (17–24 (GPMFAGKT)) interacts with ATP. Glu92 serves as the catalytic Proton acceptor. Position 121 (Phe121) interacts with substrate. Residues Cys146 and Cys149 each coordinate Zn(2+). 166–170 (LILAG) contributes to the substrate binding site. Zn(2+) is bound by residues Cys179 and Cys182.

Belongs to the thymidine kinase family.

The enzyme catalyses thymidine + ATP = dTMP + ADP + H(+). Functionally, phosphorylates thymidine. ASFV replicates in the cytoplasm of infected cells and contains genes encoding a number of enzymes needed for DNA synthesis, including thymidine kinase. Important for growth in swine macrophages in vitro and is a virus virulence factor in swine. This Ornithodoros (relapsing fever ticks) protein is Thymidine kinase.